Reading from the N-terminus, the 312-residue chain is Probable carboxylesterase 7 (312 aa).

Met-1 carries the N-acetylmethionine modification. Residues 75 to 77 (HGG) carry the Involved in the stabilization of the negatively charged intermediate by the formation of the oxyanion hole motif. Residues Ser-159, Asp-255, and His-287 contribute to the active site.

This sequence belongs to the 'GDXG' lipolytic enzyme family. As to expression, expressed in leaves, stems, flowers and siliques.

It catalyses the reaction a carboxylic ester + H2O = an alcohol + a carboxylate + H(+). Functionally, carboxylesterase acting on esters with varying acyl chain length. The protein is Probable carboxylesterase 7 (CXE7) of Arabidopsis thaliana (Mouse-ear cress).